Reading from the N-terminus, the 247-residue chain is Peptidyl-prolyl cis-trans isomerase FKBP17-2, chloroplastic (247 aa).

Residues 1–79 (MANLFTATAP…SSLTRRFGIG (79 aa)) constitute a chloroplast transit peptide. Positions 26 to 64 (QCYASSSNPPEPESSSPPPPPPPPQPLASQQKRKKNVET) are disordered. Over residues 34 to 51 (PPEPESSSPPPPPPPPQP) the composition is skewed to pro residues. The region spanning 141 to 243 (GDLVVIDLKG…EYIVEIDRVS (103 aa)) is the PPIase FKBP-type domain.

It belongs to the FKBP-type PPIase family.

It localises to the plastid. Its subcellular location is the chloroplast thylakoid lumen. It catalyses the reaction [protein]-peptidylproline (omega=180) = [protein]-peptidylproline (omega=0). In terms of biological role, PPIases accelerate the folding of proteins. It catalyzes the cis-trans isomerization of proline imidic peptide bonds in oligopeptides. The chain is Peptidyl-prolyl cis-trans isomerase FKBP17-2, chloroplastic (FKBP17-2) from Arabidopsis thaliana (Mouse-ear cress).